The sequence spans 286 residues: Aquaporin PIP2-4 (286 aa).

2 helical membrane-spanning segments follow: residues 40 to 60 and 77 to 97; these read ALIAEFVATLLFLYVTVATVI and CGGVGVLGIAWAFGGMIFILV. The short motif at 109-111 is the NPA 1 element; sequence NPA. Transmembrane regions (helical) follow at residues 128–148, 170–190, and 204–224; these read LLYMAAQCLGAICGVALVKGF, GTGLAAEIIGTFVLVYTVFSA, and VLAPLPIGFAVFMVHLATIPI. An NPA 2 motif is present at residues 230 to 232; sequence NPA. A helical transmembrane segment spans residues 252 to 272; that stretch reads IFWVGPFIGAAIAALYHQVIL.

It belongs to the MIP/aquaporin (TC 1.A.8) family. PIP (TC 1.A.8.11) subfamily. In terms of tissue distribution, expressed in roots.

It localises to the cell membrane. Water channel required to facilitate the transport of water across cell membrane. May play a role in root water uptake. The polypeptide is Aquaporin PIP2-4 (PIP2-4) (Oryza sativa subsp. japonica (Rice)).